Reading from the N-terminus, the 155-residue chain is Arginine repressor (155 aa).

The protein belongs to the ArgR family.

Its subcellular location is the cytoplasm. It functions in the pathway amino-acid biosynthesis; L-arginine biosynthesis [regulation]. In terms of biological role, regulates arginine biosynthesis genes. This chain is Arginine repressor, found in Histophilus somni (strain 2336) (Haemophilus somnus).